The chain runs to 388 residues: Staphopain A (388 aa).

A signal peptide spans 1 to 25; the sequence is MKRNFPKLIALSLILSLSVTPIANA. Residues 26 to 214 constitute a propeptide that is removed on maturation; sequence ESNSNIKAKD…TSQFKSNNYT (189 aa). Active-site residues include Cys-238, His-334, and Asn-355.

Belongs to the peptidase C47 family. In terms of assembly, in the cytoplasm, prematurely activated/folded ScpA forms a stable non-covalent complex with ScpB. In terms of processing, cleavage leads to the activation of ScpA probably by an auto-catalytic manner.

The protein resides in the secreted. The enzyme catalyses Broad endopeptidase action on proteins including elastin, but rather limited hydrolysis of small-molecule substrates. Assays are conveniently made with hemoglobin, casein or Z-Phe-Arg-NHMec as substrate.. Its activity is regulated as follows. Prematurely activated/folded staphopain A is inhibited by staphostatin A (ScpB), which is probably required to protect staphylococcal cytoplasmic proteins from degradation by ScpA. Its function is as follows. Cysteine protease that plays an important role in the inhibition of host innate immune response. Cleaves host elastins found in connective tissues, pulmonary surfactant protein A in the lungs, and the chemokine receptor CXCR2 on leukocytes. Proteolytic cleavage of surfactant protein A impairs bacterial phagocytosis by neutrophils while CXCR2 degradation blocks neutrophil activation and chemotaxis. Additionally, promotes vascular leakage by activating the plasma kallikerin/kinin system, resulting in hypotension. This Staphylococcus aureus (strain MSSA476) protein is Staphopain A (sspP).